Reading from the N-terminus, the 394-residue chain is Aromatic aminotransferase ISS1 (394 aa).

G2 carries the post-translational modification N-acetylglycine. G38 contacts substrate. Residues Y64, 98 to 99, Y123, N176, Y207, and 230 to 232 each bind pyridoxal 5'-phosphate; these read AN and SFS. 2 residues coordinate substrate: Y123 and N176. K233 carries the N6-(pyridoxal phosphate)lysine modification. R241 contacts pyridoxal 5'-phosphate. The substrate site is built by R362 and R374.

Belongs to the class-I pyridoxal-phosphate-dependent aminotransferase family. Homodimer. It depends on pyridoxal 5'-phosphate as a cofactor. As to expression, expressed in roots, cotyledons and flowers.

It localises to the cytoplasm. The enzyme catalyses a 2-oxocarboxylate + L-methionine = 4-methylsulfanyl-2-oxobutanoate + an L-alpha-amino acid. It catalyses the reaction L-tryptophan + 2-oxoglutarate = indole-3-pyruvate + L-glutamate. The catalysed reaction is L-tyrosine + 2-oxoglutarate = 3-(4-hydroxyphenyl)pyruvate + L-glutamate. Coordinates and prevents auxin (IAA) and ethylene biosynthesis, thus regulating auxin homeostasis in young seedlings. Shows aminotransferase activity with methionine; can use the ethylene biosynthetic intermediate L-methionine (L-Met) as an amino donor and the auxin biosynthetic intermediate, indole-3-pyruvic acid (3-IPA) as an amino acceptor to produce L-tryptophan (L-Trp) and 2-oxo-4-methylthiobutyric acid (KMBA). Can also use tryptophan (Trp), phenylalanine (Phe), and tyrosine (Tyr) as substrates. Regulates tryptophan (Trp) homeostasis and catabolism in mature plants. Also possibly involved in the metabolism of other aromatic amino acids and phenylpropanoid homeostasis. The chain is Aromatic aminotransferase ISS1 from Arabidopsis thaliana (Mouse-ear cress).